Reading from the N-terminus, the 855-residue chain is Probable inactive ATP-dependent zinc metalloprotease FTSHI 4, chloroplastic (855 aa).

The N-terminal 78 residues, 1-78, are a transit peptide targeting the chloroplast; that stretch reads MTFYISSSLT…SFESTESSVS (78 aa). The chain crosses the membrane as a helical span at residues 242–262; sequence VATFVVWSMRLALFVSLYVWI. Residue 356-363 coordinates ATP; the sequence is GPPGTGKT.

It belongs to the AAA ATPase family. In terms of assembly, homooligomer. Interacts with FtsHi2. In terms of tissue distribution, ubiquitous but preferentially expressed in young leaves.

The protein resides in the plastid. Its subcellular location is the chloroplast thylakoid membrane. In terms of biological role, functions in chloroplast biogenesis and chloroplast division. Required for plastid development during embryogenesis. Might be involved in chaperone functions or play a structural role in the thylakoid FtsH complex. This chain is Probable inactive ATP-dependent zinc metalloprotease FTSHI 4, chloroplastic, found in Arabidopsis thaliana (Mouse-ear cress).